An 886-amino-acid chain; its full sequence is Phosphatidylinositol 3-kinase catalytic subunit type 3 (886 aa).

In terms of domain architecture, C2 PI3K-type spans Tyr-35–Gln-184. A PIK helical domain is found at Asp-283 to Val-519. The tract at residues Gly-414–Gly-464 is disordered. Positions Ser-429–Ile-444 are enriched in polar residues. Residues Leu-445–Ser-454 show a composition bias toward low complexity. The 267-residue stretch at Ile-604–Phe-870 folds into the PI3K/PI4K catalytic domain. The G-loop stretch occupies residues Leu-610–Met-616. Positions Gly-739–Asn-747 are catalytic loop. The segment at His-758–Asn-779 is activation loop.

Belongs to the PI3/PI4-kinase family. As to quaternary structure, component of the PI3K (PI3KC3/PI3K-III/class III phosphatidylinositol 3-kinase) complex the core of which is composed of the catalytic subunit pik3c3, the regulatory subunit pik3r4 and becn1 associating with additional regulatory/auxiliary subunits to form alternative complex forms. The cofactor is Mn(2+).

The protein resides in the midbody. It carries out the reaction a 1,2-diacyl-sn-glycero-3-phospho-(1D-myo-inositol) + ATP = a 1,2-diacyl-sn-glycero-3-phospho-(1D-myo-inositol-3-phosphate) + ADP + H(+). Functionally, catalytic subunit of the PI3K complex that mediates formation of phosphatidylinositol 3-phosphate; different complex forms are believed to play a role in multiple membrane trafficking pathways. Involved in the transport of lysosomal enzyme precursors to lysosomes. Required for transport from early to late endosomes. The polypeptide is Phosphatidylinositol 3-kinase catalytic subunit type 3 (pik3c3) (Xenopus laevis (African clawed frog)).